The following is a 355-amino-acid chain: 1D-myo-inositol 2-acetamido-2-deoxy-alpha-D-glucopyranoside deacetylase 3 (355 aa).

The Zn(2+) site is built by H31, D34, and H169.

Belongs to the MshB deacetylase family. It depends on Zn(2+) as a cofactor.

It catalyses the reaction 1D-myo-inositol 2-acetamido-2-deoxy-alpha-D-glucopyranoside + H2O = 1D-myo-inositol 2-amino-2-deoxy-alpha-D-glucopyranoside + acetate. Catalyzes the deacetylation of 1D-myo-inositol 2-acetamido-2-deoxy-alpha-D-glucopyranoside (GlcNAc-Ins) in the mycothiol biosynthesis pathway. The protein is 1D-myo-inositol 2-acetamido-2-deoxy-alpha-D-glucopyranoside deacetylase 3 of Catenulispora acidiphila (strain DSM 44928 / JCM 14897 / NBRC 102108 / NRRL B-24433 / ID139908).